The chain runs to 380 residues: 1-deoxy-D-xylulose 5-phosphate reductoisomerase (380 aa).

Threonine 10, glycine 11, serine 12, isoleucine 13, glycine 36, arginine 37, asparagine 38, and asparagine 120 together coordinate NADPH. Residue lysine 121 participates in 1-deoxy-D-xylulose 5-phosphate binding. Glutamate 122 contributes to the NADPH binding site. Aspartate 146 provides a ligand contact to Mn(2+). Residues serine 147, glutamate 148, serine 172, and histidine 195 each contribute to the 1-deoxy-D-xylulose 5-phosphate site. A Mn(2+)-binding site is contributed by glutamate 148. Glycine 201 contributes to the NADPH binding site. 1-deoxy-D-xylulose 5-phosphate-binding residues include serine 208, asparagine 213, lysine 214, and glutamate 217. Glutamate 217 provides a ligand contact to Mn(2+).

Belongs to the DXR family. Requires Mg(2+) as cofactor. Mn(2+) serves as cofactor.

The enzyme catalyses 2-C-methyl-D-erythritol 4-phosphate + NADP(+) = 1-deoxy-D-xylulose 5-phosphate + NADPH + H(+). The protein operates within isoprenoid biosynthesis; isopentenyl diphosphate biosynthesis via DXP pathway; isopentenyl diphosphate from 1-deoxy-D-xylulose 5-phosphate: step 1/6. Catalyzes the NADPH-dependent rearrangement and reduction of 1-deoxy-D-xylulose-5-phosphate (DXP) to 2-C-methyl-D-erythritol 4-phosphate (MEP). This Listeria welshimeri serovar 6b (strain ATCC 35897 / DSM 20650 / CCUG 15529 / CIP 8149 / NCTC 11857 / SLCC 5334 / V8) protein is 1-deoxy-D-xylulose 5-phosphate reductoisomerase.